Consider the following 407-residue polypeptide: Phosphopentomutase (407 aa).

D10, D306, H311, D347, H348, and H359 together coordinate Mn(2+).

Belongs to the phosphopentomutase family. Mn(2+) serves as cofactor.

The protein resides in the cytoplasm. It catalyses the reaction 2-deoxy-alpha-D-ribose 1-phosphate = 2-deoxy-D-ribose 5-phosphate. The catalysed reaction is alpha-D-ribose 1-phosphate = D-ribose 5-phosphate. The protein operates within carbohydrate degradation; 2-deoxy-D-ribose 1-phosphate degradation; D-glyceraldehyde 3-phosphate and acetaldehyde from 2-deoxy-alpha-D-ribose 1-phosphate: step 1/2. In terms of biological role, isomerase that catalyzes the conversion of deoxy-ribose 1-phosphate (dRib-1-P) and ribose 1-phosphate (Rib-1-P) to deoxy-ribose 5-phosphate (dRib-5-P) and ribose 5-phosphate (Rib-5-P), respectively. This chain is Phosphopentomutase, found in Buchnera aphidicola subsp. Acyrthosiphon pisum (strain 5A).